The chain runs to 49 residues: Large ribosomal subunit protein bL33 (49 aa).

It belongs to the bacterial ribosomal protein bL33 family.

The chain is Large ribosomal subunit protein bL33 (rpmG) from Thermotoga maritima (strain ATCC 43589 / DSM 3109 / JCM 10099 / NBRC 100826 / MSB8).